The chain runs to 188 residues: MSPTPAHLNFITGNKNKLAEVQAILAGVIELRNENIDLVEIQGSVEDVTTDKARRAAEAIKGPVLVEDTCLCFKAMNDLPGPYIKWFMQSLGAAQMHKLLAGFDDKSAQAVCTFAYCEGPGHEPVLFQGRTDGKLVESRGPTAFGWDSCFEYKGQTYAEMDKSEKNKISHRGKALEKLKEWLAQKVDA.

12-17 (TGNKNK) is a binding site for ITP. Residue glutamate 40 coordinates Mg(2+). ITP contacts are provided by residues lysine 52, 68–69 (DT), lysine 85, 144–147 (FGWD), lysine 165, and 170–171 (HR).

It belongs to the HAM1 NTPase family. As to quaternary structure, homodimer. Requires Mg(2+) as cofactor. Mn(2+) is required as a cofactor.

Its subcellular location is the cytoplasm. It is found in the nucleus. It carries out the reaction ITP + H2O = IMP + diphosphate + H(+). The enzyme catalyses dITP + H2O = dIMP + diphosphate + H(+). The catalysed reaction is XTP + H2O = XMP + diphosphate + H(+). In terms of biological role, pyrophosphatase that hydrolyzes non-canonical purine nucleotides such as inosine triphosphate (ITP), deoxyinosine triphosphate (dITP) or xanthosine 5'-triphosphate (XTP) to their respective monophosphate derivatives. The enzyme does not distinguish between the deoxy- and ribose forms. Probably excludes non-canonical purines from RNA and DNA precursor pools, thus preventing their incorporation into RNA and DNA and avoiding chromosomal lesions. In Phaeosphaeria nodorum (strain SN15 / ATCC MYA-4574 / FGSC 10173) (Glume blotch fungus), this protein is Inosine triphosphate pyrophosphatase.